Reading from the N-terminus, the 441-residue chain is MAVAELSPSYKTQLKTCQQLSSSLSTRLSDHRKFSLRLLPRPVSVRGGIRCSVAPNQVQAPVAVPAEGQTGKPECYGIFCLTYDLKAEEETKTWKKMITIAVSGAAGMISNHLLFKLASGEVFGPDQPIALKLLGSERSFNALEGVAMELEDSLYPLLRAVSIGIDPYDIFQDAEWALLIGAKPRGPGMERADLLDINGQIFAEQGKALNAVASRNVKVIVVGNPCNTNALICLKNAPNIPAKNFHGLTRLDENRAKCQLALKAGVFYDKVSNMTIWGNHSTTQVPDFLNAKIDGLPVKTVIKDHKWLEEEFTVMIQKRGGALIQKWGRSSAASTAVSIADAIKSLVTPTPEGDWFSSAVYTNGNPYGIAEDLVFSMPCRSKGDGDYELVKDVVFDDYLRQRIKKSEEELLAEKRCTAHLTGEGVAVCDLPAGDTMLPGEM.

The transit peptide at 1–51 directs the protein to the chloroplast; that stretch reads MAVAELSPSYKTQLKTCQQLSSSLSTRLSDHRKFSLRLLPRPVSVRGGIRC. Cysteine 75 and cysteine 80 form a disulfide bridge. 104–110 is an NADP(+) binding site; sequence GAAGMIS. Substrate-binding residues include arginine 185 and arginine 191. Position 198 (asparagine 198) interacts with NADP(+). Residue glutamine 205 coordinates NAD(+). An NADP(+)-binding site is contributed by 222 to 224; the sequence is VGN. Substrate contacts are provided by asparagine 224 and arginine 255. Histidine 280 (proton acceptor) is an active-site residue. Cysteine 416 and cysteine 428 are joined by a disulfide.

This sequence belongs to the LDH/MDH superfamily. MDH type 2 family. Homodimer.

The protein resides in the plastid. Its subcellular location is the chloroplast. The catalysed reaction is (S)-malate + NADP(+) = oxaloacetate + NADPH + H(+). Chloroplast NADP-MDH is activated upon illumination. In order to be enzymatically active, disulfide bridges on the protein must be reduced by thioredoxin which receives electrons from ferredoxin and the electron transport system of photosynthesis. The chloroplastic, NADP-dependent form is essential for the photosynthesis C4 cycle, which allows plants to circumvent the problem of photorespiration. In C4 plants, NADP-MDH activity acts to convert oxaloacetate to malate in chloroplasts of mesophyll cells for transport to the bundle sheath cells. The protein is Malate dehydrogenase [NADP], chloroplastic (MDH1) of Mesembryanthemum crystallinum (Common ice plant).